The sequence spans 238 residues: 4-hydroxy-tetrahydrodipicolinate reductase (238 aa).

Residue 12–17 participates in NAD(+) binding; it reads GASGRM. Residue arginine 40 participates in NADP(+) binding. NAD(+) contacts are provided by residues 93 to 95 and 117 to 120; these read GTT and ASNF. The active-site Proton donor/acceptor is histidine 149. Position 150 (histidine 150) interacts with (S)-2,3,4,5-tetrahydrodipicolinate. Lysine 153 acts as the Proton donor in catalysis. 159-160 contacts (S)-2,3,4,5-tetrahydrodipicolinate; that stretch reads GT.

It belongs to the DapB family.

It is found in the cytoplasm. The catalysed reaction is (S)-2,3,4,5-tetrahydrodipicolinate + NAD(+) + H2O = (2S,4S)-4-hydroxy-2,3,4,5-tetrahydrodipicolinate + NADH + H(+). It carries out the reaction (S)-2,3,4,5-tetrahydrodipicolinate + NADP(+) + H2O = (2S,4S)-4-hydroxy-2,3,4,5-tetrahydrodipicolinate + NADPH + H(+). It participates in amino-acid biosynthesis; L-lysine biosynthesis via DAP pathway; (S)-tetrahydrodipicolinate from L-aspartate: step 4/4. Its function is as follows. Catalyzes the conversion of 4-hydroxy-tetrahydrodipicolinate (HTPA) to tetrahydrodipicolinate. This chain is 4-hydroxy-tetrahydrodipicolinate reductase, found in Xanthomonas axonopodis pv. citri (strain 306).